The primary structure comprises 64 residues: MFTLKKSLLLLFFLGTINLSLCEQERNAEEERRDDLGERQAEVEKRFFPIVGKLLFGLFGLLGK.

The N-terminal stretch at 1–22 (MFTLKKSLLLLFFLGTINLSLC) is a signal peptide. The propeptide occupies 23-46 (EQERNAEEERRDDLGERQAEVEKR). Position 62 is a leucine amide (Leu62).

The protein belongs to the frog skin active peptide (FSAP) family. Temporin subfamily. In terms of tissue distribution, expressed by the skin glands.

The protein localises to the secreted. Antimicrobial peptide with activity against Gram-positive and Gram-negative bacteria and against fungi. Has been tested against S.aureus (MIC=2.5 ug/mL), B.pumilus (MIC=2.5 ug/mL), B.cereus (MIC=30.0 ug/mL), E.coli (MIC=5.0 ug/mL), B.dysenteriae (MIC=10.0 ug/mL), A.cacoaceticus (MIC=30.0 ug/mL), P.aeruginosa (MIC=7.5 ug/mL) and C.albicans (MIC=1.25 ug/mL). Also shows a weak hemolytic activity. This chain is Temporin-ALg, found in Amolops loloensis (Lolokou Sucker Frog).